The following is a 158-amino-acid chain: Lipoprotein signal peptidase (158 aa).

A run of 3 helical transmembrane segments spans residues 12–32, 46–66, and 71–91; these read LFWW…AWIV, IIPG…FSLF, and IWLR…AILG. Active-site residues include Asp124 and Asp140. Residues 135 to 155 form a helical membrane-spanning segment; sequence VFNVADIAINIGIVCLLWSAW.

This sequence belongs to the peptidase A8 family.

It localises to the cell inner membrane. The enzyme catalyses Release of signal peptides from bacterial membrane prolipoproteins. Hydrolyzes -Xaa-Yaa-Zaa-|-(S,diacylglyceryl)Cys-, in which Xaa is hydrophobic (preferably Leu), and Yaa (Ala or Ser) and Zaa (Gly or Ala) have small, neutral side chains.. It functions in the pathway protein modification; lipoprotein biosynthesis (signal peptide cleavage). This protein specifically catalyzes the removal of signal peptides from prolipoproteins. The polypeptide is Lipoprotein signal peptidase (Thermosynechococcus vestitus (strain NIES-2133 / IAM M-273 / BP-1)).